The sequence spans 152 residues: MFP1 attachment factor 1 (152 aa).

Disordered regions lie at residues 1-33 (MAEI…PPTQ) and 107-152 (DTVK…ETEP). A WPP region spans residues 12 to 115 (TVTQETQNKP…IDTVKSRSAP (104 aa)). Over residues 134–152 (EPSSASGLTGEVSSVETEP) the composition is skewed to polar residues.

Interacts with WAP through its WPP domain. Binds to MFP1 and FPP proteins. As to expression, expressed in young tomato leaves, young fruits, and flowers (at protein level).

It localises to the nucleus envelope. The protein resides in the cytoplasm. The protein localises to the golgi apparatus. Its subcellular location is the nucleus. It is found in the nucleus matrix. The protein is MFP1 attachment factor 1 (MAF1) of Solanum lycopersicum (Tomato).